The following is a 78-amino-acid chain: Antitoxin VapB1 (78 aa).

Positions 3 to 44 (TKVFQSGNSQAVRIPMDFRFDVDTVEIFRKENGDVVLRPVSK) constitute a SpoVT-AbrB domain.

It belongs to the VapB family. In terms of assembly, forms multimers, as well forming as a complex with VapC1.

Antitoxin component of a type II toxin-antitoxin (TA) system. Upon expression in E.coli neutralizes the effect of toxin VapC1. In vitro inhibits the RNase activity of VapC1. The protein is Antitoxin VapB1 (vapB1) of Haemophilus influenzae (strain R2866).